A 595-amino-acid chain; its full sequence is Apolipoprotein N-acyltransferase 2 (595 aa).

Helical transmembrane passes span 30–50 (FLAF…FGFF), 63–83 (LFFH…HWII), 95–115 (VVAI…FPIF), 167–187 (AEIT…YTLF), and 210–230 (FITL…FLFK). Residues 241-555 (LNVLIVQPDA…AEALSETIDV (315 aa)) enclose the CN hydrolase domain. The active-site Proton acceptor is glutamate 293. Lysine 372 is a catalytic residue. Cysteine 463 serves as the catalytic Nucleophile. The helical transmembrane segment at 569–589 (LIPWLMLFLTGIYYLNLLIGI) threads the bilayer.

This sequence belongs to the CN hydrolase family. Apolipoprotein N-acyltransferase subfamily.

The protein localises to the cell inner membrane. It carries out the reaction N-terminal S-1,2-diacyl-sn-glyceryl-L-cysteinyl-[lipoprotein] + a glycerophospholipid = N-acyl-S-1,2-diacyl-sn-glyceryl-L-cysteinyl-[lipoprotein] + a 2-acyl-sn-glycero-3-phospholipid + H(+). The protein operates within protein modification; lipoprotein biosynthesis (N-acyl transfer). Catalyzes the phospholipid dependent N-acylation of the N-terminal cysteine of apolipoprotein, the last step in lipoprotein maturation. In Leptospira interrogans serogroup Icterohaemorrhagiae serovar copenhageni (strain Fiocruz L1-130), this protein is Apolipoprotein N-acyltransferase 2.